We begin with the raw amino-acid sequence, 294 residues long: Bifunctional protein FolD (294 aa).

NADP(+) is bound by residues 166–168, serine 191, and isoleucine 232; that span reads GRS.

This sequence belongs to the tetrahydrofolate dehydrogenase/cyclohydrolase family. Homodimer.

It catalyses the reaction (6R)-5,10-methylene-5,6,7,8-tetrahydrofolate + NADP(+) = (6R)-5,10-methenyltetrahydrofolate + NADPH. The enzyme catalyses (6R)-5,10-methenyltetrahydrofolate + H2O = (6R)-10-formyltetrahydrofolate + H(+). Its pathway is one-carbon metabolism; tetrahydrofolate interconversion. Functionally, catalyzes the oxidation of 5,10-methylenetetrahydrofolate to 5,10-methenyltetrahydrofolate and then the hydrolysis of 5,10-methenyltetrahydrofolate to 10-formyltetrahydrofolate. The chain is Bifunctional protein FolD from Nitrobacter hamburgensis (strain DSM 10229 / NCIMB 13809 / X14).